A 429-amino-acid polypeptide reads, in one-letter code: Cell cycle protein kinase spo4 (429 aa).

Residues 40–402 (YHVVKLVGAG…KAKTALQHEF (363 aa)) form the Protein kinase domain. ATP is bound by residues 46–54 (VGAGSFSSV) and Lys95. Catalysis depends on Asp182, which acts as the Proton acceptor. A Phosphothreonine modification is found at Thr264.

This sequence belongs to the protein kinase superfamily. Ser/Thr protein kinase family. CDC7 subfamily. Interacts with spo6.

The protein localises to the nucleus. The enzyme catalyses L-seryl-[protein] + ATP = O-phospho-L-seryl-[protein] + ADP + H(+). The catalysed reaction is L-threonyl-[protein] + ATP = O-phospho-L-threonyl-[protein] + ADP + H(+). Required for the initiation of meiosis II and progression through anaphase II. This Schizosaccharomyces pombe (strain 972 / ATCC 24843) (Fission yeast) protein is Cell cycle protein kinase spo4 (spo4).